We begin with the raw amino-acid sequence, 414 residues long: Glycogen synthase (414 aa).

The protein belongs to the glycosyltransferase group 1 family.

It carries out the reaction [(1-&gt;4)-alpha-D-glucosyl](n) + UDP-alpha-D-glucose = [(1-&gt;4)-alpha-D-glucosyl](n+1) + UDP + H(+). It participates in glycan biosynthesis; glycogen biosynthesis. Functionally, glucosyltransferase that uses UDP-glucose as the sugar donor to elongate alpha-(1-&gt;4)-glucans. Is involved in the biosynthesis of both 6-O-methylglucosyl lipopolysaccharides (MGLP) and glycogen. May also use ADP-glucose as substrate. The sequence is that of Glycogen synthase from Mycobacterium tuberculosis (strain CDC 1551 / Oshkosh).